Reading from the N-terminus, the 260-residue chain is uncharacterized protein (260 aa).

A signal peptide spans 1-22 (MGYLKRFALYISILVLIVMVAG). Cys-23 is lipidated: N-palmitoyl cysteine. Cys-23 carries S-diacylglycerol cysteine lipidation.

This sequence belongs to the staphylococcal tandem lipoprotein family.

The protein resides in the cell membrane. This is an uncharacterized protein from Staphylococcus aureus (strain bovine RF122 / ET3-1).